Here is a 158-residue protein sequence, read N- to C-terminus: Molybdopterin synthase catalytic subunit (158 aa).

Residues His107 to Arg108, Lys123, and Lys130 to Glu132 contribute to the substrate site.

Belongs to the MoaE family. MOCS2B subfamily. As to quaternary structure, heterotetramer; composed of 2 small (mocs2s) and 2 large (mocs2l) subunits.

Its subcellular location is the cytoplasm. The catalysed reaction is 2 [molybdopterin-synthase sulfur-carrier protein]-C-terminal-Gly-aminoethanethioate + cyclic pyranopterin phosphate + H2O = molybdopterin + 2 [molybdopterin-synthase sulfur-carrier protein]-C-terminal Gly-Gly + 2 H(+). It functions in the pathway cofactor biosynthesis; molybdopterin biosynthesis. Its function is as follows. Catalytic subunit of the molybdopterin synthase complex, a complex that catalyzes the conversion of precursor Z into molybdopterin. Acts by mediating the incorporation of 2 sulfur atoms from thiocarboxylated mocs2s into precursor Z to generate a dithiolene group. The polypeptide is Molybdopterin synthase catalytic subunit (mocs2l) (Dictyostelium discoideum (Social amoeba)).